A 201-amino-acid polypeptide reads, in one-letter code: Recombination protein RecR (201 aa).

The segment at 57–72 (CADCRTFTEQEHCTIC) adopts a C4-type zinc-finger fold. Positions 81–176 (GQICVVESPA…LASRIAHGVP (96 aa)) constitute a Toprim domain.

This sequence belongs to the RecR family.

In terms of biological role, may play a role in DNA repair. It seems to be involved in an RecBC-independent recombinational process of DNA repair. It may act with RecF and RecO. This is Recombination protein RecR from Yersinia enterocolitica serotype O:8 / biotype 1B (strain NCTC 13174 / 8081).